We begin with the raw amino-acid sequence, 163 residues long: Type-2 ice-structuring protein (163 aa).

The signal sequence occupies residues 1 to 17 (MLTVSLLVCAMMALTQA). Positions 18-34 (NDDKILKGTATEAGPVS) are excised as a propeptide. Residues 39–163 (PNCPAGWQPL…SHKSVCAMTF (125 aa)) enclose the C-type lectin domain. Cystine bridges form between Cys-41–Cys-52, Cys-69–Cys-159, Cys-103–Cys-134, Cys-123–Cys-145, and Cys-135–Cys-151.

The N-terminus is blocked.

The protein resides in the secreted. Functionally, antifreeze proteins lower the blood freezing point. The polypeptide is Type-2 ice-structuring protein (Hemitripterus americanus (Sea raven)).